A 221-amino-acid polypeptide reads, in one-letter code: Glutathione peroxidase 6 (221 aa).

The signal sequence occupies residues 1-19 (MFQQFQASCLVLFFLVGFA). Selenocysteine 73 is an active-site residue. Selenocysteine 73 is a non-standard amino acid (selenocysteine).

The protein belongs to the glutathione peroxidase family. In terms of tissue distribution, expressed in olfactory epithelium and embryos.

The protein resides in the secreted. It carries out the reaction 2 glutathione + H2O2 = glutathione disulfide + 2 H2O. The protein is Glutathione peroxidase 6 (GPX6) of Homo sapiens (Human).